Consider the following 282-residue polypeptide: Nucleotide-binding protein in ptsN-ptsO intergenic region (282 aa).

An ATP-binding site is contributed by 8–15 (GRSGSGKS). Residue 56–59 (DVRN) coordinates GTP.

Belongs to the RapZ-like family.

In terms of biological role, displays ATPase and GTPase activities. The chain is Nucleotide-binding protein in ptsN-ptsO intergenic region from Shewanella violacea.